The chain runs to 57 residues: Myrmicitoxin(1)-Pm7a (57 aa).

The first 23 residues, 1–23, serve as a signal peptide directing secretion; sequence MMKIIYAFLLIAVVAFMGSGIMA. Positions 24 to 31 are excised as a propeptide; sequence EPLAEAIA.

It belongs to the formicidae venom clade 4 family. As to expression, expressed by the venom gland.

The protein localises to the secreted. Probable neurotoxin. The sequence is that of Myrmicitoxin(1)-Pm7a from Pogonomyrmex maricopa (Maricopa harvester ant).